The chain runs to 310 residues: tRNA pseudouridine synthase B (310 aa).

D49 functions as the Nucleophile in the catalytic mechanism.

Belongs to the pseudouridine synthase TruB family. Type 1 subfamily.

It catalyses the reaction uridine(55) in tRNA = pseudouridine(55) in tRNA. In terms of biological role, responsible for synthesis of pseudouridine from uracil-55 in the psi GC loop of transfer RNAs. This chain is tRNA pseudouridine synthase B, found in Sinorhizobium medicae (strain WSM419) (Ensifer medicae).